Consider the following 1872-residue polypeptide: E3 ubiquitin-protein ligase UBR2 (1872 aa).

The UBR-type zinc finger occupies 96-172; it reads TACTRLCFPS…DAFKCKNELN (77 aa). Residue Lys-709 forms a Glycyl lysine isopeptide (Lys-Gly) (interchain with G-Cter in ubiquitin) linkage. The interval 1134 to 1240 is interaction with UBC2; that stretch reads RYLMETAPHV…SSNTINSCCD (107 aa). Residues 1203–1227 are disordered; sequence NNSVDTSDISTPRTTSPSLSPTRIN. Residues 1212–1225 are compositionally biased toward low complexity; the sequence is STPRTTSPSLSPTR. Phosphoserine is present on residues Ser-1218 and Ser-1222. Residues 1241 to 1362 form an RING-type; atypical zinc finger; that stretch reads DDCVFCKMPK…GLIYCPVCNS (122 aa).

It belongs to the E3 ubiquitin-protein ligase UBR1-like family. In terms of assembly, interacts with MUB1, RPN4 and UBC2.

The protein resides in the cytoplasm. The catalysed reaction is S-ubiquitinyl-[E2 ubiquitin-conjugating enzyme]-L-cysteine + [acceptor protein]-L-lysine = [E2 ubiquitin-conjugating enzyme]-L-cysteine + N(6)-ubiquitinyl-[acceptor protein]-L-lysine.. It functions in the pathway protein modification; protein ubiquitination. In terms of biological role, E3 ubiquitin-protein ligase which probably functions outside the N-end rule pathway, since it lacks the residues essential for the degradation of N-end rule substrates. Mediates RPN4 ubiquitination and subsequent degradation. The polypeptide is E3 ubiquitin-protein ligase UBR2 (UBR2) (Saccharomyces cerevisiae (strain ATCC 204508 / S288c) (Baker's yeast)).